The following is a 348-amino-acid chain: Phosphate acyltransferase (348 aa).

The protein belongs to the PlsX family. Homodimer. Probably interacts with PlsY.

Its subcellular location is the cytoplasm. The enzyme catalyses a fatty acyl-[ACP] + phosphate = an acyl phosphate + holo-[ACP]. It participates in lipid metabolism; phospholipid metabolism. Functionally, catalyzes the reversible formation of acyl-phosphate (acyl-PO(4)) from acyl-[acyl-carrier-protein] (acyl-ACP). This enzyme utilizes acyl-ACP as fatty acyl donor, but not acyl-CoA. The sequence is that of Phosphate acyltransferase from Rhizorhabdus wittichii (strain DSM 6014 / CCUG 31198 / JCM 15750 / NBRC 105917 / EY 4224 / RW1) (Sphingomonas wittichii).